Consider the following 239-residue polypeptide: UDP-2,3-diacylglucosamine hydrolase (239 aa).

D8, H10, D41, N78, and H113 together coordinate Mn(2+). 78–79 (NR) contributes to the substrate binding site. Residues D121, S159, N163, K166, and H194 each contribute to the substrate site. Mn(2+) is bound by residues H194 and H196.

Belongs to the LpxH family. The cofactor is Mn(2+).

It is found in the cell inner membrane. It catalyses the reaction UDP-2-N,3-O-bis[(3R)-3-hydroxytetradecanoyl]-alpha-D-glucosamine + H2O = 2-N,3-O-bis[(3R)-3-hydroxytetradecanoyl]-alpha-D-glucosaminyl 1-phosphate + UMP + 2 H(+). Its pathway is glycolipid biosynthesis; lipid IV(A) biosynthesis; lipid IV(A) from (3R)-3-hydroxytetradecanoyl-[acyl-carrier-protein] and UDP-N-acetyl-alpha-D-glucosamine: step 4/6. Its function is as follows. Hydrolyzes the pyrophosphate bond of UDP-2,3-diacylglucosamine to yield 2,3-diacylglucosamine 1-phosphate (lipid X) and UMP by catalyzing the attack of water at the alpha-P atom. Involved in the biosynthesis of lipid A, a phosphorylated glycolipid that anchors the lipopolysaccharide to the outer membrane of the cell. This Shewanella sp. (strain MR-7) protein is UDP-2,3-diacylglucosamine hydrolase.